A 179-amino-acid polypeptide reads, in one-letter code: Large ribosomal subunit protein uL6 (179 aa).

The protein belongs to the universal ribosomal protein uL6 family. Part of the 50S ribosomal subunit.

This protein binds to the 23S rRNA, and is important in its secondary structure. It is located near the subunit interface in the base of the L7/L12 stalk, and near the tRNA binding site of the peptidyltransferase center. The sequence is that of Large ribosomal subunit protein uL6 from Bifidobacterium adolescentis (strain ATCC 15703 / DSM 20083 / NCTC 11814 / E194a).